Reading from the N-terminus, the 170-residue chain is Odorant-binding protein 2b (170 aa).

The signal sequence occupies residues 1–15 (MKTLFLGVTLGLAAA). Cys74 and Cys166 form a disulfide bridge.

The protein belongs to the calycin superfamily. Lipocalin family. As to expression, strongly expressed in genital sphere organs such as the prostate and mammary glands.

It is found in the secreted. Its function is as follows. Probably binds and transports small hydrophobic volatile molecules. This chain is Odorant-binding protein 2b (OBP2B), found in Homo sapiens (Human).